A 473-amino-acid polypeptide reads, in one-letter code: MAAALARRGGGGLARALARGRGMCSATAAERAAGAALTSEELMRMERERSAHNYHPIPVVFSKGEGSHILDPEGNKYIDFLSAYSAVNQGHCHPKVLRALKEQAERLTLSSRAFYNDKFPIFAEYLTSMFGYEMMLPMNTGAEGVETAIKLVRKWGYEKKKIPKNEALIVSCCGCFHGRTLGVISMSCDNDATRGFGPLVPGHLKVDFGDTDGLEKIFKDHGERICGFLFEPIQGEAGVIIPPDGYLKAVRDLCSRHNILMIADEIQTGIARTGKMLACDWENIRPDVVILGKALGAGVVPVSAVLADKDIMLCIKPGEHGSTFGGNPLASAVAVASLKVVTDEGLVERAAKLGQEFRDQLQKVQQRFPQIIREVRGRGLLNAVDLSNEALSPASAYDICIKLKERGVLAKPTHDTIIRLAPPLSISPEELAEASKAFSDVLEHDLPQLQKQIKKTESAAEKQSCDRCGRDLY.

The N-terminal 32 residues, 1 to 32, are a transit peptide targeting the mitochondrion; the sequence is MAAALARRGGGGLARALARGRGMCSATAAERA. Residue Lys-293 is modified to N6-(pyridoxal phosphate)lysine.

The protein belongs to the class-III pyridoxal-phosphate-dependent aminotransferase family. Homotetramer. Pyridoxal 5'-phosphate serves as cofactor.

The protein localises to the mitochondrion matrix. It catalyses the reaction a 2-oxocarboxylate + L-ornithine = L-glutamate 5-semialdehyde + an L-alpha-amino acid. Its pathway is amino-acid biosynthesis; L-proline biosynthesis; L-glutamate 5-semialdehyde from L-ornithine: step 1/1. Confers drought and oxidative stress tolerance mainly through enhancing ROS-scavenging capacity and Pro pre-accumulation. In Oryza sativa subsp. japonica (Rice), this protein is Ornithine aminotransferase, mitochondrial (OAT).